The sequence spans 143 residues: Large ribosomal subunit protein uL13c (143 aa).

This sequence belongs to the universal ribosomal protein uL13 family. In terms of assembly, part of the 50S ribosomal subunit.

The protein localises to the plastid. The protein resides in the chloroplast. This chain is Large ribosomal subunit protein uL13c, found in Gracilaria tenuistipitata var. liui (Red alga).